A 459-amino-acid polypeptide reads, in one-letter code: Protein maelstrom (459 aa).

Positions 2 to 69 (APKKHSGFMM…AQRAKRESSN (68 aa)) form a DNA-binding region, HMG box. A disordered region spans residues 43–78 (NTQQRGPYNSGGKDANVAQRAKRESSNGHGQVDKAQ). Basic and acidic residues predominate over residues 63 to 78 (AKRESSNGHGQVDKAQ).

The protein belongs to the maelstrom family. As to expression, in germaria and egg chambers, it is detected in the germline. In the germarium, it is in all regions, including region I where the germ cells are dividing. In early egg chambers, it is uniformly distributed throughout the nurse cells and oocyte but, by stage 5, it is most concentrated around the outer margins of the cells, closest to the periphery of the egg chamber. Level decreases in stages 5 and 6, but most noticeably in the oocyte, where protein level remains. No detectable protein from stage 8 onward (at protein level).

Its subcellular location is the cytoplasm. The protein resides in the nucleus. It localises to the perinuclear region. It is found in the cytoplasmic ribonucleoprotein granule. Its function is as follows. Involved both in the piRNA and miRNA metabolic processes. As a component of the meiotic nuage, plays a central role during oogenesis by repressing transposable elements and preventing their mobilization, which is essential for the germline integrity. Repression of transposable elements is mediated via the piRNA metabolic process, which mediates the repression of transposable elements during meiosis by forming complexes composed of piRNAs and Piwi proteins and governs the repression of transposons. As a nuclear component, it is required for proper differentiation in the germline stem cell (GSC) lineage by repressing microRNA-7 (miR-7), thereby acting as an indirect regulator of bag-of-marbles (Bam). Acts by binding to the promoter of miR-7 gene and repressing its expression; miR-7 repression alleviates the Bam repression by miR-7, thereby allowing differentiation in the germline stem cell (GSC) lineage. Indirectly required to position the microtubule organizing center in stage 2-6 oocytes. Involved in repression of long interspersed nuclear elements (LINEs) including HeT-A, I-element, TART and possibly mst40 LINEs; may have a role in production of piwi-interacting RNA (piRNA). The protein is Protein maelstrom of Drosophila melanogaster (Fruit fly).